Reading from the N-terminus, the 78-residue chain is Colicin-V immunity protein (78 aa).

This protein is able to protect a cell, which harbors the plasmid ColV encoding colicin V, against colicin V. The sequence is that of Colicin-V immunity protein (cvi) from Escherichia coli.